A 51-amino-acid chain; its full sequence is Large ribosomal subunit protein eL39 (51 aa).

It belongs to the eukaryotic ribosomal protein eL39 family.

The sequence is that of Large ribosomal subunit protein eL39 from Methanococcus aeolicus (strain ATCC BAA-1280 / DSM 17508 / OCM 812 / Nankai-3).